The following is a 266-amino-acid chain: Vesicle-associated protein 4-1 (266 aa).

The segment at 28–57 (STTSSSSTQNPNQNYRSRHGNRNTDISAVS) is disordered. The MSP domain occupies 76 to 199 (RLRLDPSSYL…VEQVLRVIFI (124 aa)). Residues 200–228 (DADRPSAALEKLKRQLDEAEAAVEARKKP) adopt a coiled-coil conformation. Residues 219-229 (EAAVEARKKPP) are compositionally biased toward basic and acidic residues. Residues 219 to 239 (EAAVEARKKPPPETGPRVVGE) are disordered. Ser264 is subject to Phosphoserine.

It belongs to the VAMP-associated protein (VAP) (TC 9.B.17) family.

May play a role in vesicle trafficking. The polypeptide is Vesicle-associated protein 4-1 (PVA41) (Arabidopsis thaliana (Mouse-ear cress)).